The following is a 354-amino-acid chain: tRNase Z TRZ2, chloroplastic (354 aa).

Positions 1 to 21 (MQLSSSFPISPPKIFPSTKHH) are disordered. The N-terminal 68 residues, 1 to 68 (MQLSSSFPIS…EEEEEYRKAR (68 aa)), are a transit peptide targeting the chloroplast.

It belongs to the RNase Z family. Homodimer. The cofactor is Zn(2+). It depends on Ca(2+) as a cofactor. Mn(2+) is required as a cofactor. Mg(2+) serves as cofactor. In terms of tissue distribution, highly expressed in green and actively dividing tissues.

Its subcellular location is the plastid. It is found in the chloroplast. It catalyses the reaction Endonucleolytic cleavage of RNA, removing extra 3' nucleotides from tRNA precursor, generating 3' termini of tRNAs. A 3'-hydroxy group is left at the tRNA terminus and a 5'-phosphoryl group is left at the trailer molecule.. Zinc phosphodiesterase, which displays tRNA 3'-processing endonuclease activity. Involved in tRNA maturation, by removing a 3'-trailer from precursor tRNA. The chain is tRNase Z TRZ2, chloroplastic from Arabidopsis thaliana (Mouse-ear cress).